A 461-amino-acid chain; its full sequence is Pancreatic triacylglycerol lipase (461 aa).

Residues 1–12 form the signal peptide; that stretch reads WTLSLLLGAVVG. 2 cysteine pairs are disulfide-bonded: Cys16–Cys22 and Cys103–Cys114. Ser165 acts as the Nucleophile in catalysis. Asp189 acts as the Charge relay system in catalysis. Ca(2+) contacts are provided by Glu200, Arg203, Asp205, and Asp208. Cysteines 250 and 274 form a disulfide. The active-site Charge relay system is the His276. 3 disulfides stabilise this stretch: Cys298-Cys309, Cys312-Cys317, and Cys445-Cys461. The region spanning 351 to 461 is the PLAT domain; that stretch reads WRYRVDVTLS…EDVLLTLTAC (111 aa).

Belongs to the AB hydrolase superfamily. Lipase family. Forms a 1:1 stoichiometric complex with (pro)colipase/CLPS.

It is found in the secreted. It carries out the reaction a triacylglycerol + H2O = a diacylglycerol + a fatty acid + H(+). The enzyme catalyses 1,2,3-tributanoylglycerol + H2O = dibutanoylglycerol + butanoate + H(+). The catalysed reaction is 1,2,3-tri-(9Z-octadecenoyl)-glycerol + H2O = di-(9Z)-octadecenoylglycerol + (9Z)-octadecenoate + H(+). It catalyses the reaction all-trans-retinyl hexadecanoate + H2O = all-trans-retinol + hexadecanoate + H(+). It carries out the reaction 1,2-di-(9Z-octadecenoyl)-glycerol + H2O = (9Z-octadecenoyl)-glycerol + (9Z)-octadecenoate + H(+). Its activity is regulated as follows. Inhibited by bile salts, is reactivated by (pro)colipase/CLPS. Plays an important role in fat metabolism. It preferentially splits the esters of long-chain fatty acids at positions 1 and 3, producing mainly 2-monoacylglycerol and free fatty acids, and shows considerably higher activity against insoluble emulsified substrates than against soluble ones. The protein is Pancreatic triacylglycerol lipase (PNLIP) of Equus caballus (Horse).